Consider the following 365-residue polypeptide: Glucose 1-dehydrogenase 1 (365 aa).

Aspartate 38 is a binding site for Zn(2+). Residue threonine 40 participates in substrate binding. Positions 63 and 64 each coordinate Zn(2+). Positions 115 and 151 each coordinate substrate. Glutamate 151 provides a ligand contact to Zn(2+). NADP(+)-binding positions include 182–185, 207–208, 272–274, and 301–303; these read NGSL, RR, LGV, and SVN. Asparagine 303 contacts substrate.

The protein belongs to the zinc-containing alcohol dehydrogenase family. Glucose 1-dehydrogenase subfamily. Zn(2+) is required as a cofactor.

It carries out the reaction D-glucose + NAD(+) = D-glucono-1,5-lactone + NADH + H(+). The catalysed reaction is D-glucose + NADP(+) = D-glucono-1,5-lactone + NADPH + H(+). Its function is as follows. Catalyzes the NAD(P)(+)-dependent oxidation of D-glucose to D-gluconate via gluconolactone. Can utilize both NAD(+) and NADP(+) as electron acceptor. Is involved in the degradation of glucose through a modified Entner-Doudoroff pathway. The protein is Glucose 1-dehydrogenase 1 of Haloterrigena turkmenica (strain ATCC 51198 / DSM 5511 / JCM 9101 / NCIMB 13204 / VKM B-1734 / 4k) (Halococcus turkmenicus).